The following is a 388-amino-acid chain: MGRARRFQWPLLLLWAAAAGPGTAQEVQTENVTVAEGGVAEITCRLHQYDGSIVVIQNPARQTLFFNGTRALKDERFQLEEFSPRRVRIRLSDARLEDEGGYFCQLYTEDTHHQIATLTVLVAPENPVVEVREQAVEGGEVELSCLVPRSRPAAVLRWYRDRKELKGVSSGQENGKVWSVASTVRFRVDRKDDGGIVICEAQNQALPSGHSKQTQYVLDVQYSPTARIHASQAVVREGDTLVLTCAVTGNPRPNQIRWNRGNESLPERAEALGETLTLPGLVSADNGTYTCEAANKHGHARALYVLVVYDPGAVVEAQTSVPYAIVGGILALLVFLIICVLVGMVWCSVRQKGSYLTHEASGLDEQGEAREAFLNGSDGHKRKEEFFI.

The first 20 residues, 1–20 (MGRARRFQWPLLLLWAAAAG), serve as a signal peptide directing secretion. The Ig-like V-type domain maps to 21-119 (PGTAQEVQTE…DTHHQIATLT (99 aa)). The Extracellular segment spans residues 25-324 (QEVQTENVTV…VEAQTSVPYA (300 aa)). N-linked (GlcNAc...) asparagine glycosylation is found at Asn-31 and Asn-67. Intrachain disulfides connect Cys-44/Cys-104, Cys-145/Cys-199, and Cys-245/Cys-291. 2 Ig-like C2-type domains span residues 124 to 219 (PENP…YVLD) and 224 to 307 (PTAR…YVLV). The N-linked (GlcNAc...) asparagine glycan is linked to Asn-286. The helical transmembrane segment at 325 to 345 (IVGGILALLVFLIICVLVGMV) threads the bilayer. The Cytoplasmic segment spans residues 346 to 388 (WCSVRQKGSYLTHEASGLDEQGEAREAFLNGSDGHKRKEEFFI). The residue at position 361 (Ser-361) is a Phosphoserine.

This sequence belongs to the nectin family. In terms of assembly, monomer and homodimer. N-glycosylated.

It is found in the membrane. Involved in the cell-cell adhesion. Has calcium- and magnesium-independent cell-cell adhesion activity. May have tumor-suppressor activity. This Rattus norvegicus (Rat) protein is Cell adhesion molecule 4 (Cadm4).